The sequence spans 412 residues: Protein MT3510 (412 aa).

Position 227 is an N6-(pyridoxal phosphate)lysine (Lys227).

Belongs to the DegT/DnrJ/EryC1 family.

The sequence is that of Protein MT3510 from Mycobacterium tuberculosis (strain CDC 1551 / Oshkosh).